The primary structure comprises 393 residues: NAD(P)H-quinone oxidoreductase subunit H, chloroplastic (393 aa).

Belongs to the complex I 49 kDa subunit family. NDH is composed of at least 16 different subunits, 5 of which are encoded in the nucleus.

The protein resides in the plastid. Its subcellular location is the chloroplast thylakoid membrane. It catalyses the reaction a plastoquinone + NADH + (n+1) H(+)(in) = a plastoquinol + NAD(+) + n H(+)(out). The enzyme catalyses a plastoquinone + NADPH + (n+1) H(+)(in) = a plastoquinol + NADP(+) + n H(+)(out). NDH shuttles electrons from NAD(P)H:plastoquinone, via FMN and iron-sulfur (Fe-S) centers, to quinones in the photosynthetic chain and possibly in a chloroplast respiratory chain. The immediate electron acceptor for the enzyme in this species is believed to be plastoquinone. Couples the redox reaction to proton translocation, and thus conserves the redox energy in a proton gradient. This is NAD(P)H-quinone oxidoreductase subunit H, chloroplastic from Platanus occidentalis (Sycamore).